A 907-amino-acid polypeptide reads, in one-letter code: Epidermal growth factor receptor substrate 15-like 1 (907 aa).

The residue at position 2 (alanine 2) is an N-acetylalanine. One can recognise an EH 1 domain in the interval 15–104 (GNPLYESYYK…SLTMPPPKFH (90 aa)). Residues 15–368 (GNPLYESYYK…PSERGTPIPD (354 aa)) form an interaction with DAB2 region. One can recognise an EF-hand 1 domain in the interval 48–83 (LSDIILGKIWDLADPEGKGFLDKQGFYVALRLVACA). Phosphotyrosine is present on tyrosine 74. Phosphoserine occurs at positions 107 and 108. Residues 127-215 (EKAKFDGIFE…PPLIPPSKRK (89 aa)) form the EH 2 domain. Residues 159–194 (LPLDVLGRVWDLSDIDKDGHLDRDEFAVAMHLVYRA) form the EF-hand 2 domain. Positions 172, 174, 176, 178, and 183 each coordinate Ca(2+). A phosphoserine mark is found at serine 229, serine 244, serine 253, serine 255, and serine 259. The tract at residues 229-260 (SPPPKDSLRSTPSHGSVSSLNSTGSLSPKHSV) is disordered. Over residues 241 to 255 (SHGSVSSLNSTGSLS) the composition is skewed to low complexity. 2 consecutive EF-hand domains span residues 272–307 (ADKM…SGLT) and 308–341 (QNLL…IQQK). The 91-residue stretch at 273–363 (DKMRFDEIFL…PDMVPPSERG (91 aa)) folds into the EH 3 domain. Serine 360 carries the post-translational modification Phosphoserine. Threonine 364 bears the Phosphothreonine mark. 2 positions are modified to phosphoserine: serine 369 and serine 375. Residues 384-551 (LDDISQEIAQ…RSKLSQLQES (168 aa)) are a coiled coil. Serine 558 carries the post-translational modification Phosphoserine. A Phosphotyrosine modification is found at tyrosine 562. Serine 610 carries the post-translational modification Phosphoserine. The interval 611–860 (QELHPDPFQA…SSSGFADFTS (250 aa)) is disordered. Positions 622-636 (DPFKSDPFKGADPFK) are enriched in basic and acidic residues. Polar residues predominate over residues 643 to 652 (DPFSEQQTAA). Serine 664, serine 670, serine 695, serine 715, and serine 732 each carry phosphoserine. The segment covering 682 to 696 (NDPFTSDPFTKNPSL) has biased composition (polar residues). Residues 703–743 (FESSDPFSSSSISSKGSDPFGTLDPFGSSSFSSAEGFADFS) show a composition bias toward low complexity. Positions 776–790 (ALPPKKPAPPRPKPP) are enriched in pro residues. Serine 791 bears the Phosphoserine mark. Over residues 791-802 (SGQSTPVSQLGS) the composition is skewed to polar residues. Phosphothreonine is present on threonine 795. Residues 840–853 (APSSSAKPPKTSSS) are compositionally biased toward low complexity. UIM domains lie at 863 to 882 (NEEQ…EQER) and 889 to 907 (QEQE…DMPA).

Interacts with EPS15, AGFG1/HRB and AGFG2/HRBL. Associates with the clathrin-associated adapter protein complex 2 (AP-2). Interacts with FCHO1. Interacts with FCHO2. Interacts (via EH domains) with DAB2. Interacts with UBQLN1 (via ubiquitin-like domain). Interacts with CAVIN3 (via leucine-zipper domain). Interacts with REPS2. In terms of processing, phosphorylated on tyrosine residues by EGFR.

It is found in the cell membrane. The protein localises to the nucleus. It localises to the membrane. Its subcellular location is the coated pit. Functionally, seems to be a constitutive component of clathrin-coated pits that is required for receptor-mediated endocytosis. Involved in endocytosis of integrin beta-1 (ITGB1) and transferrin receptor (TFR); internalization of ITGB1 as DAB2-dependent cargo but not TFR seems to require association with DAB2. The protein is Epidermal growth factor receptor substrate 15-like 1 (Eps15l1) of Mus musculus (Mouse).